The sequence spans 510 residues: Protein disulfide-isomerase (510 aa).

Positions 1 to 20 are cleaved as a signal peptide; that stretch reads MLRRALLCLALTALFRAGAG. In terms of domain architecture, Thioredoxin 1 spans 27–136; that stretch reads HVLVLHKGNF…IVNWLKKRTG (110 aa). Active-site nucleophile residues include C55 and C58. A disulfide bridge connects residues C55 and C58. K202 is modified (N6-acetyllysine). An N6-succinyllysine mark is found at K224 and K273. Residues S333 and S359 each carry the phosphoserine modification. A Thioredoxin 2 domain is found at 351–477; the sequence is GKIKPHLMSQ…FKKFLESGGQ (127 aa). Residues C399 and C402 each act as nucleophile in the active site. The cysteines at positions 399 and 402 are disulfide-linked. The residue at position 429 (S429) is a Phosphoserine. The tract at residues 473 to 510 is disordered; the sequence is ESGGQDGAGDDDDLEDLEEAEEPDLEEDDDQKAVKDEL. Residues 480–502 show a composition bias toward acidic residues; the sequence is AGDDDDLEDLEEAEEPDLEEDDD. The short motif at 507-510 is the Prevents secretion from ER element; sequence KDEL.

The protein belongs to the protein disulfide isomerase family. Heterodimer; heterodimerizes with the protein microsomal triglyceride transfer MTTP. Homodimer. Monomers and homotetramers may also occur. Interacts with P4HA2, forming a heterotetramer consisting of 2 alpha subunits (P4HA2) and 2 beta (P4HB), where P4HB plays the role of a structural subunit; this tetramer catalyzes the formation of 4-hydroxyproline in collagen. Also constitutes the structural subunit of the microsomal triacylglycerol transfer protein MTTP in mammalian cells. Stabilizes both enzymes and retain them in the ER without contributing to the catalytic activity. Binds UBQLN1. Interacts with ERO1B. Interacts with ILDR2. Interacts with ERN1/IRE1A (via N-terminus); the interaction is enhanced by phosphorylation of P4HB by FAM20C in response to endoplasmic reticulum stress and results in attenuation of ERN1 activity. Post-translationally, phosphorylation of Ser-359 by FAM20C is induced by endoplasmic reticulum stress and results in a functional switch from oxidoreductase to molecular chaperone. It also promotes interaction with ERN1.

The protein localises to the endoplasmic reticulum. The protein resides in the endoplasmic reticulum lumen. Its subcellular location is the melanosome. It localises to the cell membrane. It carries out the reaction Catalyzes the rearrangement of -S-S- bonds in proteins.. Its function is as follows. This multifunctional protein catalyzes the formation, breakage and rearrangement of disulfide bonds. At the cell surface, seems to act as a reductase that cleaves disulfide bonds of proteins attached to the cell. May therefore cause structural modifications of exofacial proteins. Inside the cell, seems to form/rearrange disulfide bonds of nascent proteins. At high concentrations and following phosphorylation by FAM20C, functions as a chaperone that inhibits aggregation of misfolded proteins. At low concentrations, facilitates aggregation (anti-chaperone activity). May be involved with other chaperones in the structural modification of the TG precursor in hormone biogenesis. Also acts as a structural subunit of various enzymes such as prolyl 4-hydroxylase and microsomal triacylglycerol transfer protein MTTP. Receptor for LGALS9; the interaction retains P4HB at the cell surface of Th2 T helper cells, increasing disulfide reductase activity at the plasma membrane, altering the plasma membrane redox state and enhancing cell migration. The sequence is that of Protein disulfide-isomerase (P4HB) from Bos taurus (Bovine).